Consider the following 787-residue polypeptide: Pleckstrin homology domain-containing family G member 6 (787 aa).

In terms of domain architecture, DH spans 161–353 (HQQEALWELL…ESFLRHINGQ (193 aa)). Positions 409 to 509 (QLLLEGPVRV…WLEKTQHAQT (101 aa)) constitute a PH domain. Residues 533-762 (QGTESPSTRP…EPGNGKPRRL (230 aa)) are disordered. The span at 535-557 (TESPSTRPSTPSPSPEDSQSSAE) shows a compositional bias: low complexity. The segment covering 724 to 742 (LRPRSLREDMLREIREELA) has biased composition (basic and acidic residues).

In terms of assembly, interacts with MYH10. Interacts with ELMO1 and EZR (in an open conformation). Interacts with CSPP1.

It localises to the cell projection. The protein resides in the microvillus. It is found in the cytoplasm. The protein localises to the cytoskeleton. Its subcellular location is the spindle. It localises to the cleavage furrow. Its function is as follows. Guanine nucleotide exchange factor activating the small GTPase RHOA, which, in turn, induces myosin filament formation. Also activates RHOG. Does not activate RAC1, or to a much lower extent than RHOA and RHOG. Part of a functional unit, involving PLEKHG6, MYH10 and RHOA, at the cleavage furrow to advance furrow ingression during cytokinesis. In epithelial cells, required for the formation of microvilli and membrane ruffles on the apical pole. Along with EZR, required for normal macropinocytosis. The protein is Pleckstrin homology domain-containing family G member 6 (Plekhg6) of Mus musculus (Mouse).